The primary structure comprises 65 residues: Oxiana weak toxin (65 aa).

5 cysteine pairs are disulfide-bonded: Cys3-Cys24, Cys6-Cys11, Cys17-Cys42, Cys46-Cys57, and Cys58-Cys63.

This sequence belongs to the three-finger toxin family. Ancestral subfamily. Orphan group II sub-subfamily. As to expression, expressed by the venom gland.

It localises to the secreted. Functionally, binds to muscle and neuronal nicotinic acetylcholine receptors (nAChR). It binds to extracellular domain of rat alpha-7/CHRNA7 nAChR (IC(50)=2.2 uM) and to Torpedo californica membranes (IC(50)=30 uM). The chain is Oxiana weak toxin from Naja oxiana (Central Asian cobra).